We begin with the raw amino-acid sequence, 387 residues long: NifS-like protein (387 aa).

Pyridoxal 5'-phosphate-binding positions include 58–59 (SE) and 184–186 (SIN).

Belongs to the class-V pyridoxal-phosphate-dependent aminotransferase family. NifS/IscS subfamily. Pyridoxal 5'-phosphate is required as a cofactor.

It is found in the virion. In African swine fever virus (isolate Tick/South Africa/Pretoriuskop Pr4/1996) (ASFV), this protein is NifS-like protein.